The chain runs to 81 residues: MKPNIHPKTYQVIFQDVNSGYRFLSRSTKTSDETAEWEDGKTYPVIKVEVSSDTHPFYTGRQKFNERGGRVEQFKKRFNMD.

The protein belongs to the bacterial ribosomal protein bL31 family. Type B subfamily. In terms of assembly, part of the 50S ribosomal subunit.

The polypeptide is Large ribosomal subunit protein bL31B (Bacillus licheniformis (strain ATCC 14580 / DSM 13 / JCM 2505 / CCUG 7422 / NBRC 12200 / NCIMB 9375 / NCTC 10341 / NRRL NRS-1264 / Gibson 46)).